A 521-amino-acid polypeptide reads, in one-letter code: Probable protein kinase UbiB (521 aa).

The Protein kinase domain maps to 119 to 497 (SFDRQPVASA…QKRTNRLLQS (379 aa)). Residues 125-133 (VASASIAQV) and lysine 151 contribute to the ATP site. The Proton acceptor role is filled by aspartate 286. The chain crosses the membrane as a helical span at residues 496 to 516 (QSLIYGGLGFVLGLLVMQLFV).

Belongs to the ABC1 family. UbiB subfamily.

It localises to the cell inner membrane. The protein operates within cofactor biosynthesis; ubiquinone biosynthesis [regulation]. In terms of biological role, is probably a protein kinase regulator of UbiI activity which is involved in aerobic coenzyme Q (ubiquinone) biosynthesis. The polypeptide is Probable protein kinase UbiB (Acidovorax sp. (strain JS42)).